A 150-amino-acid polypeptide reads, in one-letter code: SsrA-binding protein (150 aa).

The protein belongs to the SmpB family.

It localises to the cytoplasm. Its function is as follows. Required for rescue of stalled ribosomes mediated by trans-translation. Binds to transfer-messenger RNA (tmRNA), required for stable association of tmRNA with ribosomes. tmRNA and SmpB together mimic tRNA shape, replacing the anticodon stem-loop with SmpB. tmRNA is encoded by the ssrA gene; the 2 termini fold to resemble tRNA(Ala) and it encodes a 'tag peptide', a short internal open reading frame. During trans-translation Ala-aminoacylated tmRNA acts like a tRNA, entering the A-site of stalled ribosomes, displacing the stalled mRNA. The ribosome then switches to translate the ORF on the tmRNA; the nascent peptide is terminated with the 'tag peptide' encoded by the tmRNA and targeted for degradation. The ribosome is freed to recommence translation, which seems to be the essential function of trans-translation. The sequence is that of SsrA-binding protein from Bacteroides thetaiotaomicron (strain ATCC 29148 / DSM 2079 / JCM 5827 / CCUG 10774 / NCTC 10582 / VPI-5482 / E50).